Here is a 184-residue protein sequence, read N- to C-terminus: U3 small nucleolar ribonucleoprotein protein IMP3 (184 aa).

Residues 109 to 175 (RRLPTVLLKL…IKRHVLEYNE (67 aa)) form the S4 RNA-binding domain.

The protein belongs to the universal ribosomal protein uS4 family. In terms of assembly, part of the small subunit (SSU) processome, composed of more than 70 proteins and the RNA chaperone small nucleolar RNA (snoRNA) U3. Component of a heterotrimeric complex containing IMP3, IMP4 and MPHOSPH10. Interacts with MPHOSPH10.

It localises to the nucleus. The protein resides in the nucleolus. In terms of biological role, component of the 60-80S U3 small nucleolar ribonucleoprotein (U3 snoRNP). Required for the early cleavages during pre-18S ribosomal RNA processing. Part of the small subunit (SSU) processome, first precursor of the small eukaryotic ribosomal subunit. During the assembly of the SSU processome in the nucleolus, many ribosome biogenesis factors, an RNA chaperone and ribosomal proteins associate with the nascent pre-rRNA and work in concert to generate RNA folding, modifications, rearrangements and cleavage as well as targeted degradation of pre-ribosomal RNA by the RNA exosome. In Homo sapiens (Human), this protein is U3 small nucleolar ribonucleoprotein protein IMP3.